Here is a 380-residue protein sequence, read N- to C-terminus: Glucose-1-phosphate adenylyltransferase (380 aa).

Alpha-D-glucose 1-phosphate contacts are provided by residues Gly164, 179–180 (EK), and Ser190.

The protein belongs to the bacterial/plant glucose-1-phosphate adenylyltransferase family. Homotetramer.

It catalyses the reaction alpha-D-glucose 1-phosphate + ATP + H(+) = ADP-alpha-D-glucose + diphosphate. It participates in glycan biosynthesis; glycogen biosynthesis. In terms of biological role, involved in the biosynthesis of ADP-glucose, a building block required for the elongation reactions to produce glycogen. Catalyzes the reaction between ATP and alpha-D-glucose 1-phosphate (G1P) to produce pyrophosphate and ADP-Glc. The protein is Glucose-1-phosphate adenylyltransferase of Streptococcus pneumoniae serotype 2 (strain D39 / NCTC 7466).